Consider the following 382-residue polypeptide: Sphingoid long-chain base transporter RSB1 (382 aa).

At 1–34 the chain is on the extracellular side; the sequence is MSNATNNTLGSLLPQLEAAANSNSLYGGMVPNLR. 2 N-linked (GlcNAc...) asparagine glycosylation sites follow: Asn3 and Asn6. The chain crosses the membrane as a helical span at residues 35 to 55; the sequence is FNITMIVIWGILLTIHVVQLL. Topologically, residues 56–57 are cytoplasmic; that stretch reads MR. A helical membrane pass occupies residues 58–78; sequence QYWFSIAFICTGILEVLGFIG. Residues 79–90 are Extracellular-facing; that stretch reads RTWSHSNVADMD. A helical transmembrane segment spans residues 91 to 111; that stretch reads AFLLNMICLTIAPVFTMGGIY. At 112 to 135 the chain is on the cytoplasmic side; that stretch reads YQLAKLIEVYGHRFSLLPSPMAYS. The chain crosses the membrane as a helical span at residues 136-156; that stretch reads FIFICSDIVSLVVQAVGGGLC. At 157–171 the chain is on the extracellular side; it reads GVAVTDGTSTTTGNH. The helical transmembrane segment at 172 to 192 threads the bilayer; it reads VFIAGLAIQVASMAIFLMLWF. The Cytoplasmic segment spans residues 193–241; sequence HFLFRIYISVRWEHINSRPISLSLLKISQTEVDYLYREKFHFLRLEPKR. The chain crosses the membrane as a helical span at residues 242-262; it reads WVFHYFNLAMTVAVLTIFTRC. The Extracellular segment spans residues 263 to 281; it reads CYRLAELVVGWDGYLITHE. The chain crosses the membrane as a helical span at residues 282–302; that stretch reads WYFIILDALMMAIATVTLTIF. Residues 303–382 lie on the Cytoplasmic side of the membrane; it reads HPGFAFKGRS…LFSSKKKAKL (80 aa).

The protein belongs to the lipid-translocating exporter (LTE) (TC 9.A.26.1) family.

It localises to the cell membrane. In terms of biological role, catalyzes the ATP-dependent translocation of sphingoid long-chain bases (LCBs) from the cytoplasmic site toward the extracytoplasmic side of the membrane (flip-flop). Involved in the establishment of the functional lipid asymmetry of the plasma membrane. Regulates intracellular levels of LCBs, sphingolipid precursors that are growth inhibitory at increased levels. This Saccharomyces cerevisiae (strain RM11-1a) (Baker's yeast) protein is Sphingoid long-chain base transporter RSB1 (RSB1).